The following is a 341-amino-acid chain: MSDAFKPLLAKLADGQTLDDSDAELFFAACLRGEPTPAQVAAAVTAIRLRGETVGEIAACARAMRRAAIPLEHPYDVIDVCGTGGDGLHTLNISTAVGFVAAGGGLKVAKHGNRAITSKSGTADVLTALGVNIDATREQQRKALDEAGICFLFAQAHHGAMKHVSPIRQQLGFRTIFNLLGPLTNPAGAKRQVVGVSAPRFVEPIAKALGALGAERAWSVHGSGMDELTTTGETEVAEWRDGVVRLFKITPEAVGLPRAALADLTGGDPAFNAAALTRLFDGETGPYRDIVLLNAAAAFLVADKVETLVEGVALAAEAIDSGRAKAALAGLVAATNTEVPA.

5-phospho-alpha-D-ribose 1-diphosphate is bound by residues glycine 82, 85 to 86, threonine 90, 92 to 95, 110 to 118, and threonine 122; these read GD, NIST, and KHGNRAITS. Glycine 82 contributes to the anthranilate binding site. Residue serine 94 participates in Mg(2+) binding. Residue asparagine 113 participates in anthranilate binding. Arginine 168 is an anthranilate binding site. Mg(2+) is bound by residues aspartate 226 and glutamate 227.

Belongs to the anthranilate phosphoribosyltransferase family. Homodimer. The cofactor is Mg(2+).

The enzyme catalyses N-(5-phospho-beta-D-ribosyl)anthranilate + diphosphate = 5-phospho-alpha-D-ribose 1-diphosphate + anthranilate. It functions in the pathway amino-acid biosynthesis; L-tryptophan biosynthesis; L-tryptophan from chorismate: step 2/5. Functionally, catalyzes the transfer of the phosphoribosyl group of 5-phosphorylribose-1-pyrophosphate (PRPP) to anthranilate to yield N-(5'-phosphoribosyl)-anthranilate (PRA). The polypeptide is Anthranilate phosphoribosyltransferase (Caulobacter vibrioides (strain ATCC 19089 / CIP 103742 / CB 15) (Caulobacter crescentus)).